A 714-amino-acid chain; its full sequence is Methyl-accepting chemotaxis protein TlpQ (714 aa).

A helical membrane pass occupies residues 12–32 (ITLLAGLCLLGVVALLVGLSV). Residues 50–290 (LDESARLRLE…LLGKNLAKAD (241 aa)) form the Cache domain. Residues glutamate 170, 208–210 (YFD), and aspartate 239 each bind histamine. A helical transmembrane segment spans residues 360-380 (TWVELGLGLGAAVLGLLVLWL). Residues 383–437 (RGVTRPILGVAHMLRDIASGEGDLTQRLPHTGRDELGELAGWFNRFLDKLQPIIR) enclose the HAMP domain. A Methyl-accepting transducer domain is found at 442 to 678 (SVRDARSTAD…EINRNVAAIR (237 aa)).

This sequence belongs to the methyl-accepting chemotaxis (MCP) protein family. Homotetramer.

It is found in the cell membrane. Functionally, chemotactic-signal transducers respond to changes in the concentration of attractants and repellents in the environment, transduce a signal from the outside to the inside of the cell, and facilitate sensory adaptation through the variation of the level of methylation. TlpQ is a chemoreceptor that binds and mediates chemotaxis to histamine, a key biological signaling molecule. It binds histamine with high affinity, which permits responses to very low histamine concentrations. Chemotaxis to histamine may play a role in the virulence of P.aeruginosa by recruiting cells at the infection site and consequently modulating the expression of quorum-sensing-dependent virulence genes. TlpQ also binds and mediates chemotaxis to polyamines such as putrescine, spermidine, cadaverine, agmatine and ethylenediamine. In addition, binds the quorum-sensing signal autoinducer 2 (AI-2), thus inducing chemotaxis toward AI-2 and biofilm formation. This chain is Methyl-accepting chemotaxis protein TlpQ, found in Pseudomonas aeruginosa (strain ATCC 15692 / DSM 22644 / CIP 104116 / JCM 14847 / LMG 12228 / 1C / PRS 101 / PAO1).